The following is a 309-amino-acid chain: Serine/threonine-protein phosphatase PP2A catalytic subunit (309 aa).

The Mn(2+) site is built by Asp57, His59, Asp85, and Asn117. The Proton donor role is filled by His118. The Mn(2+) site is built by His167 and His241.

Belongs to the PPP phosphatase family. PP-2A subfamily. Mn(2+) is required as a cofactor.

The catalysed reaction is O-phospho-L-seryl-[protein] + H2O = L-seryl-[protein] + phosphate. It carries out the reaction O-phospho-L-threonyl-[protein] + H2O = L-threonyl-[protein] + phosphate. This chain is Serine/threonine-protein phosphatase PP2A catalytic subunit, found in Brassica napus (Rape).